Reading from the N-terminus, the 457-residue chain is Toxin and drug export protein A (457 aa).

An N-terminal signal peptide occupies residues 1–23 (MFTIKKLTLTIVVATTLTGCANI).

Belongs to the outer membrane factor (OMF) (TC 1.B.17) family. Homotrimer. Probably part of a complex composed of LtxB, LtxD and TdeA, which forms a single transport channel across the two membranes.

The protein localises to the cell outer membrane. In terms of biological role, required for secretion of the LtxA leukotoxin and resistance to various antimicrobial compounds. The protein is Toxin and drug export protein A of Aggregatibacter actinomycetemcomitans (Actinobacillus actinomycetemcomitans).